The chain runs to 770 residues: Molybdenum cofactor sulfurase (770 aa).

K231 is subject to N6-(pyridoxal phosphate)lysine. C395 is an active-site residue. In terms of domain architecture, MOSC spans 601 to 770 (DWVSRALGVS…TVSGVIEESE (170 aa)).

Belongs to the class-V pyridoxal-phosphate-dependent aminotransferase family. MOCOS subfamily. Requires pyridoxal 5'-phosphate as cofactor.

The enzyme catalyses Mo-molybdopterin + L-cysteine + AH2 = thio-Mo-molybdopterin + L-alanine + A + H2O. Its function is as follows. Sulfurates the molybdenum cofactor. Sulfation of molybdenum is essential for xanthine dehydrogenase (XDH) and aldehyde oxidase (ADO) enzymes in which molybdenum cofactor is liganded by 1 oxygen and 1 sulfur atom in active form. This chain is Molybdenum cofactor sulfurase, found in Anopheles gambiae (African malaria mosquito).